The following is a 158-amino-acid chain: MSVFLGTHQNRLDAKGRVSIPAGFRTALRAQAAAGEALVILRPSHQYPCIEAWPTAAFAALSQPLDRLDMFSDEHDDMAAALYADAYPVDADREGRIILPDTLKEHAALTDSVAFMGLGRTFQIWEPAAAERRRAEARTRSRQLALPAQGRRQGGADA.

SpoVT-AbrB domains follow at residues 7 to 57 (THQN…PTAA) and 86 to 129 (AYPV…EPAA). The segment at 133-158 (RRAEARTRSRQLALPAQGRRQGGADA) is disordered.

Belongs to the MraZ family. Forms oligomers.

It is found in the cytoplasm. It localises to the nucleoid. The sequence is that of Transcriptional regulator MraZ from Gluconacetobacter diazotrophicus (strain ATCC 49037 / DSM 5601 / CCUG 37298 / CIP 103539 / LMG 7603 / PAl5).